An 856-amino-acid polypeptide reads, in one-letter code: Genome polyprotein (856 aa).

One can recognise a Peptidase S30 domain in the interval 141–284 (KLTEGQMNHL…QSVLNSMIQF (144 aa)). Catalysis depends on for P1 proteinase activity residues His-192, Asp-201, and Ser-235. An Involved in interaction with stylet and aphid transmission motif is present at residues 334–337 (KITC). The Involved in virions binding and aphid transmission motif lies at 592–594 (PTK). The region spanning 618-740 (LYIAKQGYCY…ESDIKHYRVG (123 aa)) is the Peptidase C6 domain. Residues Cys-626 and His-699 each act as for helper component proteinase activity in the active site.

The protein belongs to the potyviridae genome polyprotein family. Genome polyprotein of potyviruses undergoes post-translational proteolytic processing by the main proteinase NIa-pro resulting in the production of at least ten individual proteins. The P1 proteinase and the HC-pro cleave only their respective C-termini autocatalytically. 6K1 is essential for proper proteolytic separation of P3 from CI.

The enzyme catalyses Hydrolyzes a Gly-|-Gly bond at its own C-terminus, commonly in the sequence -Tyr-Xaa-Val-Gly-|-Gly, in the processing of the potyviral polyprotein.. Its function is as follows. Required for aphid transmission and also has proteolytic activity. Only cleaves a Gly-Gly dipeptide at its own C-terminus. Interacts with virions and aphid stylets. Acts as a suppressor of RNA-mediated gene silencing, also known as post-transcriptional gene silencing (PTGS), a mechanism of plant viral defense that limits the accumulation of viral RNAs. May have RNA-binding activity. The chain is Genome polyprotein from Potato virus Y (strain O) (PVY).